A 225-amino-acid chain; its full sequence is Membrane protein (225 aa).

Over 1–20 (MSNETNCTLDFEQSVELFKE) the chain is Virion surface. The chain crosses the membrane as a helical span at residues 21-41 (YNLFITAFLLFLTIILQYGYA). At 42 to 51 (TRSKFIYILK) the chain is on the intravirion side. Residues 52 to 72 (MIVLWCFWPLNIAVGVISCIY) form a helical membrane-spanning segment. Residues 73–77 (PPNTG) are Virion surface-facing. A helical transmembrane segment spans residues 78–98 (GLVAAIILTVFACLSFVGYWI). The Intravirion segment spans residues 99–225 (QSIRLFKRCR…VATGGSSLYT (127 aa)).

Belongs to the gammacoronaviruses M protein family. Homomultimer. Interacts with envelope E protein in the budding compartment of the host cell, which is located between endoplasmic reticulum and the Golgi complex. Forms a complex with HE and S proteins. Interacts with nucleocapsid N protein. This interaction probably participates in RNA packaging into the virus.

Its subcellular location is the virion membrane. It localises to the host Golgi apparatus membrane. Its function is as follows. Component of the viral envelope that plays a central role in virus morphogenesis and assembly via its interactions with other viral proteins. The protein is Membrane protein of Gallus gallus (Chicken).